We begin with the raw amino-acid sequence, 631 residues long: Phosphomethylpyrimidine synthase (631 aa).

Substrate contacts are provided by residues asparagine 239, methionine 268, tyrosine 297, histidine 333, 353–355 (SRG), 394–397 (DGLR), and glutamate 433. A Zn(2+)-binding site is contributed by histidine 437. Tyrosine 460 contributes to the substrate binding site. Histidine 501 serves as a coordination point for Zn(2+). [4Fe-4S] cluster is bound by residues cysteine 581, cysteine 584, and cysteine 589.

It belongs to the ThiC family. In terms of assembly, homodimer. Requires [4Fe-4S] cluster as cofactor.

It carries out the reaction 5-amino-1-(5-phospho-beta-D-ribosyl)imidazole + S-adenosyl-L-methionine = 4-amino-2-methyl-5-(phosphooxymethyl)pyrimidine + CO + 5'-deoxyadenosine + formate + L-methionine + 3 H(+). Its pathway is cofactor biosynthesis; thiamine diphosphate biosynthesis. Its function is as follows. Catalyzes the synthesis of the hydroxymethylpyrimidine phosphate (HMP-P) moiety of thiamine from aminoimidazole ribotide (AIR) in a radical S-adenosyl-L-methionine (SAM)-dependent reaction. The protein is Phosphomethylpyrimidine synthase of Citrobacter koseri (strain ATCC BAA-895 / CDC 4225-83 / SGSC4696).